An 824-amino-acid polypeptide reads, in one-letter code: MEVSKEEFLRQFGGDYGYPGAPKGVDEMRAAEFKRLEGMAYLDHAGATLYSEAQMADVLKDLASNVYGNPHSQSDSSMAASDLVTAARHQVLKYFNASPREYKCIFTSGATAALKLVGECFPWSRESCYMYTMENHNSVLGIREYALSKGATVLAVDVEEGADLAKDNGSYSLYKISRRTNQRRSKDVLSHNCQNGSLSDISGNNWNIFAFPSECNFSGQKFSLSLVKLIKEGKIPLQQQGKWMVLIDAAKGCATEPPNLTVYPADFVVCSFYKIFGYPTGLGALIVKNEAANLLNKTYFSGGTVAASIADIDFVQKRKNIEQVLEDGTISFLNIASLRHGFKIIEMLTTSAIERHTTSLATYVRNKMLDLKHSNEINVCTIYGQQYSKVEGLKMGPTITFNLKREDGSWFGYREVEKLASLFGIHLRTGCFCNPGACAKYLGLSHSDLVSNFEAGHVCWDDNDIINGKPTGAVRISFGYMSTFEDAEKFLKFLQSSFVSLPVQFNNGYMLNLNSLNLIDNSSQKAVSDIHLKSIIIYPVKSCQGFSVKSWPLTTGGLMYDREWLLQGSGGEILTQKKVPELGSIRTLIDLELGKLFIESPTRRDKLQLSLLESLADLSEEVDVFGQRYEVQSYDDRVNTWFSEAIGRPCTLVRCSSSKYRSCTYTGLRDRPCRDTQSKLNFVNEGQLLLISEESISDLNSRLNSGKGDCKQKLPVDAMRFRPNLVISGSSPYSEDNWKKLRIGEACFTSMGGCNRCQMINLHQDSGQVLKSKEPLATLASYRRKKGKILFGILLNYEDIMEGENETIAGRWLQVGQQVYPSTE.

Lys274 is subject to N6-(pyridoxal phosphate)lysine. The active site involves Cys433. The region spanning 655 to 822 (CSSSKYRSCT…LQVGQQVYPS (168 aa)) is the MOSC domain.

It belongs to the class-V pyridoxal-phosphate-dependent aminotransferase family. MOCOS subfamily. It depends on pyridoxal 5'-phosphate as a cofactor.

It catalyses the reaction Mo-molybdopterin + L-cysteine + AH2 = thio-Mo-molybdopterin + L-alanine + A + H2O. It functions in the pathway cofactor biosynthesis; molybdopterin biosynthesis. Its function is as follows. Sulfurates the molybdenum cofactor. Sulfation of molybdenum is essential for xanthine dehydrogenase (XDH) and aldehyde oxidase (ADO) enzymes in which molybdenum cofactor is liganded by 1 oxygen and 1 sulfur atom in active form. This chain is Molybdenum cofactor sulfurase (MCSU3), found in Oryza sativa subsp. japonica (Rice).